The sequence spans 106 residues: Nucleoid-associated protein Noc_2594 (106 aa).

Disordered regions lie at residues M1 to E20 and Q85 to L106. Residues K10 to E20 show a composition bias toward polar residues.

The protein belongs to the YbaB/EbfC family. In terms of assembly, homodimer.

The protein localises to the cytoplasm. It localises to the nucleoid. Its function is as follows. Binds to DNA and alters its conformation. May be involved in regulation of gene expression, nucleoid organization and DNA protection. The chain is Nucleoid-associated protein Noc_2594 from Nitrosococcus oceani (strain ATCC 19707 / BCRC 17464 / JCM 30415 / NCIMB 11848 / C-107).